We begin with the raw amino-acid sequence, 147 residues long: Putative protein CLUHP3 (147 aa).

Residues 14-47 (KEPEGGRRRLSHPGNMGWMRPSQETTPPDRSHHS) form a disordered region.

The sequence is that of Putative protein CLUHP3 (CLUHP3) from Homo sapiens (Human).